A 271-amino-acid polypeptide reads, in one-letter code: Neurexophilin-1 (271 aa).

The N-terminal stretch at 1–21 is a signal peptide; the sequence is MQAACWYVLLLLQPTIYLVTC. The tract at residues 22–97 is II; that stretch reads ANLTNGGKSE…WDWLRNSTDL (76 aa). Asn-23, Asn-68, Asn-93, Asn-146, Asn-156, and Asn-162 each carry an N-linked (GlcNAc...) asparagine glycan. An III region spans residues 98-176; sequence QEPRPRAKRR…LVPPTKIVEF (79 aa). The tract at residues 177–185 is IV (linker domain); it reads DLAQQTVID. Residues 186 to 271 are v (Cys-rich); the sequence is AKDSKSFNCR…HSDTPYFPSG (86 aa).

This sequence belongs to the neurexophilin family.

The protein localises to the secreted. Its function is as follows. May be signaling molecules that resemble neuropeptides and that act by binding to alpha-neurexins and possibly other receptors. This is Neurexophilin-1 (NXPH1) from Pongo abelii (Sumatran orangutan).